Here is a 643-residue protein sequence, read N- to C-terminus: Phosphatidylinositol-3,5-bisphosphate 3-phosphatase MTMR2 (643 aa).

2 stretches are compositionally biased toward polar residues: residues 1 to 12 and 23 to 40; these read MEKSSSCESLGS and DSLS…VHTK. Residues 1-56 are disordered; the sequence is MEKSSSCESLGSQPAAARPPSVDSLSSASTSHSENSVHTKSASVVSSDSISTSADN. Phosphoserine is present on residues S6 and S9. Residues 41 to 55 are compositionally biased toward low complexity; sequence SASVVSSDSISTSAD. At S58 the chain carries Phosphoserine. The region spanning 68–139 is the GRAM domain; the sequence is NKLAEMEEPP…GVINRVEKIG (72 aa). One can recognise a Myotubularin phosphatase domain in the interval 205–580; it reads GWKLYDPLLE…RHLELWVGYY (376 aa). Residues N330, N355, and I356 each contribute to the a 1,2-diacyl-sn-glycero-3-phospho-(1D-myo-inositol-3,5-bisphosphate) site. Residues N330, N355, and I356 each coordinate a 1,2-diacyl-sn-glycero-3-phospho-(1D-myo-inositol-3-phosphate). C417 serves as the catalytic Phosphocysteine intermediate. A 1,2-diacyl-sn-glycero-3-phospho-(1D-myo-inositol-3,5-bisphosphate) contacts are provided by S418, D419, G420, W421, D422, R423, R459, and R463. Residues S418, D419, G420, W421, D422, and R423 each contribute to the a 1,2-diacyl-sn-glycero-3-phospho-(1D-myo-inositol-3-phosphate) site. R463 is an a 1,2-diacyl-sn-glycero-3-phospho-(1D-myo-inositol-3-phosphate) binding site. The stretch at 593-627 forms a coiled coil; the sequence is IHNRYKELLAKRAELQKKVEELQREISNRSTSSSE. The segment at 615–643 is disordered; that stretch reads QREISNRSTSSSERASSPAQCVTPVQTVV. Over residues 620–631 the composition is skewed to low complexity; sequence NRSTSSSERASS. Polar residues predominate over residues 632–643; the sequence is PAQCVTPVQTVV.

Belongs to the protein-tyrosine phosphatase family. Non-receptor class myotubularin subfamily. As to quaternary structure, homodimer (via coiled-coil domain). Heterotetramer consisting of one MTMR2 dimer and one SBF2/MTMR13 dimer; specifically in peripheral nerves stabilizes SBF2/MTMR13 at the membranes and increases MTMR2 catalytic activity towards phosphatidylinositol 3,5-bisphosphate and to a lesser extent towards phosphatidylinositol 3-phosphate. Heterodimer with SBF1/MTMR5; acts as an adapter for the phosphatase MTMR2 to regulate MTMR2 catalytic activity and subcellular location. Heterodimer with MTMR12. Post-translationally, phosphorylation at Ser-58 decreases MTMR2 localization to endocytic vesicular structures.

It localises to the cytoplasm. It is found in the early endosome membrane. The protein resides in the perinuclear region. The protein localises to the cell projection. Its subcellular location is the axon. It localises to the endosome membrane. It carries out the reaction a 1,2-diacyl-sn-glycero-3-phospho-(1D-myo-inositol-3,5-bisphosphate) + H2O = a 1,2-diacyl-sn-glycero-3-phospho-(1D-myo-inositol-5-phosphate) + phosphate. It catalyses the reaction a 1,2-diacyl-sn-glycero-3-phospho-(1D-myo-inositol-3-phosphate) + H2O = a 1,2-diacyl-sn-glycero-3-phospho-(1D-myo-inositol) + phosphate. The enzyme catalyses 1,2-dioctanoyl-sn-glycero-3-phospho-(1-D-myo-inositol-3-phosphate) + H2O = 1,2-dioctanoyl-sn-glycero-3-phospho-(1D-myo-inositol) + phosphate. The catalysed reaction is 1,2-dioctanoyl-sn-glycero-3-phospho-(1D-myo-inositol-3,5-bisphosphate) + H2O = 1,2-dioctanoyl-sn-glycero-3-phospho-(1D-myo-inositol-5-phosphate) + phosphate. In terms of biological role, lipid phosphatase that specifically dephosphorylates the D-3 position of phosphatidylinositol 3-phosphate and phosphatidylinositol 3,5-bisphosphate, generating phosphatidylinositol and phosphatidylinositol 5-phosphate. Regulates the level of these phosphoinositides critical for various biological processes including autophagy initiation and autophagosome maturation. This chain is Phosphatidylinositol-3,5-bisphosphate 3-phosphatase MTMR2, found in Homo sapiens (Human).